The chain runs to 394 residues: Chorismate synthase (394 aa).

NADP(+)-binding residues include R42 and R48. FMN-binding positions include 137-139 (RAS), 258-259 (QA), G302, 317-321 (KPIAT), and R343.

The protein belongs to the chorismate synthase family. In terms of assembly, homotetramer. FMNH2 is required as a cofactor.

The enzyme catalyses 5-O-(1-carboxyvinyl)-3-phosphoshikimate = chorismate + phosphate. Its pathway is metabolic intermediate biosynthesis; chorismate biosynthesis; chorismate from D-erythrose 4-phosphate and phosphoenolpyruvate: step 7/7. Functionally, catalyzes the anti-1,4-elimination of the C-3 phosphate and the C-6 proR hydrogen from 5-enolpyruvylshikimate-3-phosphate (EPSP) to yield chorismate, which is the branch point compound that serves as the starting substrate for the three terminal pathways of aromatic amino acid biosynthesis. This reaction introduces a second double bond into the aromatic ring system. In Streptomyces avermitilis (strain ATCC 31267 / DSM 46492 / JCM 5070 / NBRC 14893 / NCIMB 12804 / NRRL 8165 / MA-4680), this protein is Chorismate synthase.